Consider the following 231-residue polypeptide: 7-cyano-7-deazaguanine synthase (231 aa).

8-18 (LSGGLDSATAA) contributes to the ATP binding site. Cysteine 189, cysteine 197, cysteine 200, and cysteine 203 together coordinate Zn(2+).

This sequence belongs to the QueC family. It depends on Zn(2+) as a cofactor.

The enzyme catalyses 7-carboxy-7-deazaguanine + NH4(+) + ATP = 7-cyano-7-deazaguanine + ADP + phosphate + H2O + H(+). The protein operates within purine metabolism; 7-cyano-7-deazaguanine biosynthesis. In terms of biological role, catalyzes the ATP-dependent conversion of 7-carboxy-7-deazaguanine (CDG) to 7-cyano-7-deazaguanine (preQ(0)). This is 7-cyano-7-deazaguanine synthase from Synechococcus elongatus (strain ATCC 33912 / PCC 7942 / FACHB-805) (Anacystis nidulans R2).